Here is a 210-residue protein sequence, read N- to C-terminus: ATP-dependent Clp protease proteolytic subunit (210 aa).

Catalysis depends on serine 106, which acts as the Nucleophile. Histidine 131 is an active-site residue.

Belongs to the peptidase S14 family. In terms of assembly, fourteen ClpP subunits assemble into 2 heptameric rings which stack back to back to give a disk-like structure with a central cavity, resembling the structure of eukaryotic proteasomes.

It localises to the cytoplasm. It carries out the reaction Hydrolysis of proteins to small peptides in the presence of ATP and magnesium. alpha-casein is the usual test substrate. In the absence of ATP, only oligopeptides shorter than five residues are hydrolyzed (such as succinyl-Leu-Tyr-|-NHMec, and Leu-Tyr-Leu-|-Tyr-Trp, in which cleavage of the -Tyr-|-Leu- and -Tyr-|-Trp bonds also occurs).. Cleaves peptides in various proteins in a process that requires ATP hydrolysis. Has a chymotrypsin-like activity. Plays a major role in the degradation of misfolded proteins. This Afipia carboxidovorans (strain ATCC 49405 / DSM 1227 / KCTC 32145 / OM5) (Oligotropha carboxidovorans) protein is ATP-dependent Clp protease proteolytic subunit.